The primary structure comprises 239 residues: Ribonuclease PH (239 aa).

Residues arginine 87 and 125-127 contribute to the phosphate site; that span reads GTR.

It belongs to the RNase PH family. Homohexameric ring arranged as a trimer of dimers.

It carries out the reaction tRNA(n+1) + phosphate = tRNA(n) + a ribonucleoside 5'-diphosphate. In terms of biological role, phosphorolytic 3'-5' exoribonuclease that plays an important role in tRNA 3'-end maturation. Removes nucleotide residues following the 3'-CCA terminus of tRNAs; can also add nucleotides to the ends of RNA molecules by using nucleoside diphosphates as substrates, but this may not be physiologically important. Probably plays a role in initiation of 16S rRNA degradation (leading to ribosome degradation) during starvation. This Cyanothece sp. (strain PCC 7425 / ATCC 29141) protein is Ribonuclease PH.